An 81-amino-acid polypeptide reads, in one-letter code: ATP synthase subunit c, chloroplastic (81 aa).

The next 2 helical transmembrane spans lie at Pro-3–Gly-23 and Leu-57–Ala-77.

The protein belongs to the ATPase C chain family. As to quaternary structure, F-type ATPases have 2 components, F(1) - the catalytic core - and F(0) - the membrane proton channel. F(1) has five subunits: alpha(3), beta(3), gamma(1), delta(1), epsilon(1). F(0) has four main subunits: a(1), b(1), b'(1) and c(10-14). The alpha and beta chains form an alternating ring which encloses part of the gamma chain. F(1) is attached to F(0) by a central stalk formed by the gamma and epsilon chains, while a peripheral stalk is formed by the delta, b and b' chains.

Its subcellular location is the plastid. The protein localises to the chloroplast thylakoid membrane. Functionally, f(1)F(0) ATP synthase produces ATP from ADP in the presence of a proton or sodium gradient. F-type ATPases consist of two structural domains, F(1) containing the extramembraneous catalytic core and F(0) containing the membrane proton channel, linked together by a central stalk and a peripheral stalk. During catalysis, ATP synthesis in the catalytic domain of F(1) is coupled via a rotary mechanism of the central stalk subunits to proton translocation. Its function is as follows. Key component of the F(0) channel; it plays a direct role in translocation across the membrane. A homomeric c-ring of between 10-14 subunits forms the central stalk rotor element with the F(1) delta and epsilon subunits. This is ATP synthase subunit c, chloroplastic from Agrostis stolonifera (Creeping bentgrass).